Consider the following 237-residue polypeptide: Putative HTH-type transcriptional regulator ycf28 (237 aa).

The 74-residue stretch at 155–228 folds into the HTH crp-type domain; it reads KSITNRLISL…KKKVIIHDPI (74 aa). A DNA-binding region (H-T-H motif) is located at residues 188 to 207; the sequence is HKVLAQIIGSNRVSITRIIS.

The protein localises to the plastid. It localises to the chloroplast. This is Putative HTH-type transcriptional regulator ycf28 (ycf28) from Porphyra purpurea (Red seaweed).